The primary structure comprises 131 residues: Large ribosomal subunit protein bL20 (131 aa).

The protein belongs to the bacterial ribosomal protein bL20 family.

Functionally, binds directly to 23S ribosomal RNA and is necessary for the in vitro assembly process of the 50S ribosomal subunit. It is not involved in the protein synthesizing functions of that subunit. The chain is Large ribosomal subunit protein bL20 from Mycolicibacterium paratuberculosis (strain ATCC BAA-968 / K-10) (Mycobacterium paratuberculosis).